The sequence spans 104 residues: Nucleoid-associated protein OB0030 (104 aa).

The segment at 1–23 is disordered; it reads MKGNMNNMMKQMQKMQKKMMQAQ.

The protein belongs to the YbaB/EbfC family. In terms of assembly, homodimer.

Its subcellular location is the cytoplasm. It is found in the nucleoid. In terms of biological role, binds to DNA and alters its conformation. May be involved in regulation of gene expression, nucleoid organization and DNA protection. In Oceanobacillus iheyensis (strain DSM 14371 / CIP 107618 / JCM 11309 / KCTC 3954 / HTE831), this protein is Nucleoid-associated protein OB0030.